Consider the following 477-residue polypeptide: Spliceosome-associated protein CWC27 homolog (477 aa).

The region spanning 11–166 is the PPIase cyclophilin-type domain; the sequence is SNGKVLLKTT…NPHKIKCTEV (156 aa). Disordered stretches follow at residues 203–355 and 401–477; these read LLSF…AENT and TQAI…KERR. The segment covering 208–218 has biased composition (acidic residues); that stretch reads EEAEEDEEEVN. 2 stretches are compositionally biased toward basic and acidic residues: residues 230 to 240 and 247 to 258; these read SSHDLLKDDPR and VEREKDSQSADS. Acidic residues predominate over residues 259-279; it reads DKDEDEMSDDDDEEEDDEMDS. Composition is skewed to basic and acidic residues over residues 280 to 299, 311 to 353, and 430 to 442; these read DEKHQMKDRISNKLRKDPSK, EERK…KEAE, and QFEEKSGKVKDAN. Positions 308–381 form a coiled coil; the sequence is DEAEERKSSR…EEVRKKNTNK (74 aa).

The protein belongs to the cyclophilin-type PPIase family. Part of the activated spliceosome B/catalytic step 1 spliceosome, one of the forms of the spliceosome which has a well-formed active site but still cannot catalyze the branching reaction and is composed at least of 52 proteins, the U2, U5 and U6 snRNAs and the pre-mRNA. Recruited during early steps of activated spliceosome B maturation, it is probably one of the first proteins released from this complex as he matures to the spliceosome C complex. Component of the minor spliceosome, which splices U12-type introns.

The protein localises to the nucleus. As part of the spliceosome, plays a role in pre-mRNA splicing. Probable inactive PPIase with no peptidyl-prolyl cis-trans isomerase activity. In Xenopus laevis (African clawed frog), this protein is Spliceosome-associated protein CWC27 homolog (cwc27).